Consider the following 425-residue polypeptide: Mothers against decapentaplegic homolog 3 (425 aa).

The residue at position 2 (S2) is an N-acetylserine. Residue T8 is modified to Phosphothreonine; by CDK2 and CDK4. In terms of domain architecture, MH1 spans 10 to 136 (PIVKRLLGWK…YQRVETPVLP (127 aa)). A Glycyl lysine isopeptide (Lys-Gly) (interchain with G-Cter in ubiquitin) cross-link involves residue K33. C64 serves as a coordination point for Zn(2+). K81 is covalently cross-linked (Glycyl lysine isopeptide (Lys-Gly) (interchain with G-Cter in ubiquitin)). 3 residues coordinate Zn(2+): C109, C121, and H126. Positions 137-231 (PVLVPRHTEI…QPVTYCEPAF (95 aa)) are linker. Residues 165-177 (NFPAGIEPQSNIP) show a composition bias toward polar residues. The tract at residues 165–208 (NFPAGIEPQSNIPETPPPGYLSEDGETSDHQMNHSMDAGSPNLS) is disordered. T179 is subject to Phosphothreonine; by CDK2, CDK4 and MAPK. S204 carries the phosphoserine; by GSK3 and MAPK modification. S208 is subject to Phosphoserine; by MAPK. The residue at position 213 (S213) is a Phosphoserine; by CDK2 and CDK4. Residues 232-425 (WCSISYYELN…SPSIRCSSVS (194 aa)) enclose the MH2 domain. Positions 271-324 (LGLLSNVNRNAAVELTRRHIGRGVRLYYIGGEVFAECLSDSAIFVQSPNCNQRY) are sufficient for interaction with XPO4. An N6-acetyllysine modification is found at K378. The residue at position 416 (S416) is a Phosphoserine. S418 is subject to Phosphoserine; by CK1. 3 positions are modified to phosphoserine; by TGFBR1: S422, S423, and S425.

The protein belongs to the dwarfin/SMAD family. Monomer; in the absence of TGF-beta. Homooligomer; in the presence of TGF-beta. Heterotrimer; forms a heterotrimer in the presence of TGF-beta consisting of two molecules of C-terminally phosphorylated SMAD2 or SMAD3 and one of SMAD4 to form the transcriptionally active SMAD2/SMAD3-SMAD4 complex. Part of a complex consisting of MAGI2/ARIP1, ACVR2A, ACVR1B and SMAD3. Forms a complex with SMAD2 and TRIM33 upon addition of TGF-beta. Found in a complex composed of SMAD3, RAN and XPO4; within the complex interacts directly with XPO4. Component of the multimeric complex SMAD3/SMAD4/JUN/FOS which forms at the AP1 promoter site; required for synergistic transcriptional activity in response to TGF-beta. Part of a ternary complex composed of SMAD3, ITCH/AIP4 and NEDD9/HEF1; within the complex NEDD9/HEF1 interacts (via N-terminus) with ITCH/AIP4; the complex mediates ubiquitination and proteasomal degradation of NEDD9/HEF1. Interacts with NEDD9; the interaction promotes NEDD9 ubiquitination and proteasomal degradation. Interacts (via an N-terminal domain) with JUN (via its basic DNA binding and leucine zipper domains); this interaction is essential for DNA binding and cooperative transcriptional activity in response to TGF-beta. Identified in a complex that contains at least ZNF451, SMAD2, SMAD3 and SMAD4. Interacts with PPM1A; the interaction dephosphorylates SMAD3 in the C-terminal SXS motif leading to disruption of the SMAD2/3-SMAD4 complex, nuclear export and termination of TGF-beta signaling. Interacts (via MH2 domain) with ZMIZ1 (via SP-RING-type domain); in the TGF-beta signaling pathway increases the activity of the SMAD3/SMAD4 transcriptional complex. Interacts (when phosphorylated) with RNF111; RNF111 acts as an enhancer of the transcriptional responses by mediating ubiquitination and degradation of SMAD3 inhibitors. Interacts (dephosphorylated form via the MH1 and MH2 domains) with RANBP3 (via its C-terminal R domain); the interaction results in the export of dephosphorylated SMAD3 out of the nucleus and termination of the TGF-beta signaling. Interacts (via MH2 domain) with LEMD3; the interaction represses SMAD3 transcriptional activity through preventing the formation of the heteromeric complex with SMAD4 and translocation to the nucleus. Interacts (via the linker region) with EP300 (C-terminal); the interaction promotes SMAD3 acetylation and is enhanced by TGF-beta phosphorylation in the C-terminal of SMAD3. This interaction can be blocked by competitive binding of adenovirus oncoprotein E1A to the same C-terminal site on EP300, which then results in partially inhibited SMAD3/SMAD4 transcriptional activity. Interacts with TGFBR1. Interacts with TGFB1I1. Interacts with PRDM16. Interacts with SNW1. Interacts (via MH2 domain) with ZFYVE9. Interacts with HDAC1. Interacts with TGIF2. Interacts with SKOR1. Interacts with SKOR2. Interacts with DACH1; the interaction inhibits the TGF-beta signaling. Interacts with RBPMS. Interacts (via MH2 domain) with MECOM. Interacts with WWTR1 (via its coiled-coil domain). Interacts with SKI; the interaction represses SMAD3 transcriptional activity. Interacts with MEN1. Interacts with IL1F7. Interaction with CSNK1G2. Interacts with PDPK1 (via PH domain). Interacts with DAB2; the interactions are enhanced upon TGF-beta stimulation. Interacts with USP15. Interacts with PPP5C; the interaction decreases SMAD3 phosphorylation and protein levels. Interacts with LDLRAD4 (via the SMAD interaction motif). Interacts with PMEPA1. Interacts with ZNF451. Interacts with ZFHX3. Interacts weakly with ZNF8. Interacts with STUB1, HSPA1A, HSPA1B, HSP90AA1 and HSP90AB1. Interacts with YAP1 (when phosphorylated at 'Ser-55'). Interacts with MAGI2/ARIP1. Interacts (via MH2 domain) with CITED2 (via C-terminus). Interacts with HGS. Interacts with WWP1. Interacts with TTRAP. Interacts with FOXL2. Interacts with PML. Interacts with NEDD4L; the interaction requires TGF-beta stimulation. Interacts with ZC3H3. Interacts with TGIF. Interacts with CREBBP. Interacts with ATF2. Interacts with NEDD9; the interaction is inhibited by oxidation of NEDD9. Interacts with MTMR4; negatively regulates TGF-beta signaling through SMAD3 dephosphorylation and retention in endosomes. In terms of processing, phosphorylated on serine and threonine residues. Enhanced phosphorylation in the linker region on Thr-179, Ser-204 and Ser-208 on EGF and TGF-beta treatment. Ser-208 is the main site of MAPK-mediated phosphorylation. CDK-mediated phosphorylation occurs in a cell-cycle dependent manner and inhibits both the transcriptional activity and antiproliferative functions of SMAD3. This phosphorylation is inhibited by flavopiridol. Maximum phosphorylation at the G(1)/S junction. Also phosphorylated on serine residues in the C-terminal SXS motif by TGFBR1 and ACVR1. TGFBR1-mediated phosphorylation at these C-terminal sites is required for interaction with SMAD4, nuclear location and transactivational activity, and appears to be a prerequisite for the TGF-beta mediated phosphorylation in the linker region. Dephosphorylated in the C-terminal SXS motif by PPM1A. This dephosphorylation disrupts the interaction with SMAD4, promotes nuclear export and terminates TGF-beta-mediated signaling. Phosphorylation at Ser-418 by CSNK1G2/CK1 promotes ligand-dependent ubiquitination and subsequent proteasome degradation, thus inhibiting SMAD3-mediated TGF-beta responses. Phosphorylated by PDPK1. Post-translationally, acetylation in the nucleus by EP300 in the MH2 domain regulates positively its transcriptional activity and is enhanced by TGF-beta. Poly-ADP-ribosylated by PARP1 and PARP2. ADP-ribosylation negatively regulates SMAD3 transcriptional responses during the course of TGF-beta signaling. In terms of processing, ubiquitinated. Monoubiquitinated, leading to prevent DNA-binding. Deubiquitination by USP15 alleviates inhibition and promotes activation of TGF-beta target genes. Ubiquitinated by RNF111, leading to its degradation: only SMAD3 proteins that are 'in use' are targeted by RNF111, RNF111 playing a key role in activating SMAD3 and regulating its turnover. Undergoes STUB1-mediated ubiquitination and degradation. In terms of tissue distribution, highly expressed in the brain and ovary. Detected in the pyramidal cells of the hippocampus, granule cells of the dentate gyrus, granular cells of the cerebral cortex and the granulosa cells of the ovary.

The protein resides in the cytoplasm. The protein localises to the nucleus. In terms of biological role, receptor-regulated SMAD (R-SMAD) that is an intracellular signal transducer and transcriptional modulator activated by TGF-beta (transforming growth factor) and activin type 1 receptor kinases. Binds the TRE element in the promoter region of many genes that are regulated by TGF-beta and, on formation of the SMAD3/SMAD4 complex, activates transcription. Also can form a SMAD3/SMAD4/JUN/FOS complex at the AP-1/SMAD site to regulate TGF-beta-mediated transcription. Has an inhibitory effect on wound healing probably by modulating both growth and migration of primary keratinocytes and by altering the TGF-mediated chemotaxis of monocytes. This effect on wound healing appears to be hormone-sensitive. Regulator of chondrogenesis and osteogenesis and inhibits early healing of bone fractures. Positively regulates PDPK1 kinase activity by stimulating its dissociation from the 14-3-3 protein YWHAQ which acts as a negative regulator. In Sus scrofa (Pig), this protein is Mothers against decapentaplegic homolog 3 (SMAD3).